A 200-amino-acid chain; its full sequence is Glutathione S-transferase 1-1 (200 aa).

The 73-residue stretch at 1 to 73 (GSSPCRSVIM…YLVEKYGKTD (73 aa)) folds into the GST N-terminal domain. Glutathione is bound by residues Ser-2, 43–45 (HTI), and 57–59 (ESR). Residues 79–200 (CPKKRAVINQ…AGCLEFKKYF (122 aa)) form the GST C-terminal domain.

Belongs to the GST superfamily. Theta family. Homodimer.

The enzyme catalyses RX + glutathione = an S-substituted glutathione + a halide anion + H(+). The catalysed reaction is 1,1,1-trichloro-2,2-bis(4-chlorophenyl)ethane = 1,1-dichloro-2,2-bis(4-chlorophenyl)ethylene + chloride + H(+). Conjugation of reduced glutathione to a wide number of exogenous and endogenous hydrophobic electrophiles. Has DDT dehydrochlorinase activity. This chain is Glutathione S-transferase 1-1 (GstD1), found in Drosophila teissieri (Fruit fly).